The sequence spans 443 residues: Thymidine phosphorylase (443 aa).

Belongs to the thymidine/pyrimidine-nucleoside phosphorylase family. In terms of assembly, homodimer.

It catalyses the reaction thymidine + phosphate = 2-deoxy-alpha-D-ribose 1-phosphate + thymine. The protein operates within pyrimidine metabolism; dTMP biosynthesis via salvage pathway; dTMP from thymine: step 1/2. In terms of biological role, the enzymes which catalyze the reversible phosphorolysis of pyrimidine nucleosides are involved in the degradation of these compounds and in their utilization as carbon and energy sources, or in the rescue of pyrimidine bases for nucleotide synthesis. The protein is Thymidine phosphorylase of Aeromonas salmonicida (strain A449).